Consider the following 96-residue polypeptide: ATP synthase subunit e, mitochondrial (96 aa).

S2 carries the post-translational modification N-acetylserine.

It belongs to the ATPase e subunit family. As to quaternary structure, F-type ATPases have 2 components, CF(1) - the catalytic core - and CF(0) - the membrane proton channel. In yeast, the dimeric form of ATP synthase consists of 17 polypeptides: alpha, beta, gamma, delta, epsilon, 4 (B), 5 (OSCP), 6 (A), 8, 9 (C), d, E (Tim11), f, g, h, i/j and k.

It is found in the mitochondrion. The protein localises to the mitochondrion inner membrane. In terms of biological role, mitochondrial membrane ATP synthase (F(1)F(0) ATP synthase or Complex V) produces ATP from ADP in the presence of a proton gradient across the membrane which is generated by electron transport complexes of the respiratory chain. F-type ATPases consist of two structural domains, F(1) - containing the extramembraneous catalytic core, and F(0) - containing the membrane proton channel, linked together by a central stalk and a peripheral stalk. During catalysis, ATP synthesis in the catalytic domain of F(1) is coupled via a rotary mechanism of the central stalk subunits to proton translocation. Part of the complex F(0) domain. Minor subunit located with subunit a in the membrane. The polypeptide is ATP synthase subunit e, mitochondrial (TIM11) (Saccharomyces cerevisiae (strain ATCC 204508 / S288c) (Baker's yeast)).